A 450-amino-acid polypeptide reads, in one-letter code: MSFLWAKEFCVLKYPYKLFITHKFSYLLRFETVTLNNIRSPQFYAKLTFSHHQPTVSGTMSTELKFISKYLQISIPETKEGPVSSLFKAVSEQKPELLGNTDFEKAQILEWTTKAFSPIETQSIVEQLDEFLKSSTFIAQDSGISVADLAVYARIHSYICGLSAKEGYKLNNVCRWFDFIQHQESVMEAANSMSMKLANIDLNAPKIQRPSVIKKDKKEKKEGKPSQEASVKSVEKAPKGLEGAKKEKQNKKEKKDKKDKKDKKEKAPKEPPKAATPVPSMIDFRIGFIEKAVKHPNADSLYVSTIHCGDAEGPRTVCSGLVKYIPLEQMQQRKVIVVANLKPVNMRSVKSQAMVFCASSPDKSVVEFVLPPENAEIGDRLTFEGFDTEEPEAQLNPKRKIWEAIQPGFTSGEDLICGYKDESGLHRLFVKGKKDLGFCKAQTVVNGTLS.

The tract at residues 208–278 (QRPSVIKKDK…KEPPKAATPV (71 aa)) is disordered. Basic and acidic residues-rich tracts occupy residues 213–225 (IKKDKKEKKEGKP) and 233–247 (SVEKAPKGLEGAKKE). Basic residues predominate over residues 248 to 261 (KQNKKEKKDKKDKK). The span at 262-272 (DKKEKAPKEPP) shows a compositional bias: basic and acidic residues. A tRNA-binding domain is found at 278 to 382 (VPSMIDFRIG…ENAEIGDRLT (105 aa)).

It belongs to the tRNA-aminoacylation cofactor ARC1 family. Component of a yeast aminoacyl-tRNA synthase (aaRS) complex formed by methionyl-tRNA synthase, glutamyl-tRNA synthase and the tRNA aminoacylation cofactor arc1 in a stoichiometric complex. Interacts with rar1/mes1 and gus1.

It localises to the cytoplasm. Its function is as follows. Binds to tRNA and functions as a cofactor for the methionyl-tRNA synthetase (MetRS) and glutamyl-tRNA synthetase (GluRS). Forms a complex with MetRS and GluRS and increases their affinity for cognate tRNAs due to the presence of a tRNA binding domain in its middle and C-terminal part. The chain is tRNA-aminoacylation cofactor arc1 from Schizosaccharomyces pombe (strain 972 / ATCC 24843) (Fission yeast).